The sequence spans 464 residues: GTPase Der (464 aa).

2 consecutive EngA-type G domains span residues Pro5–Gly169 and Ile190–His368. GTP contacts are provided by residues Gly11 to Ser18, Asp58 to Ile62, Asn121 to Asp124, Gly196 to Ser203, Asp243 to Met247, and Asn308 to Asp311. The KH-like domain occupies Asn369–Val461.

This sequence belongs to the TRAFAC class TrmE-Era-EngA-EngB-Septin-like GTPase superfamily. EngA (Der) GTPase family. As to quaternary structure, associates with the 50S ribosomal subunit.

In terms of biological role, GTPase that plays an essential role in the late steps of ribosome biogenesis. The sequence is that of GTPase Der from Akkermansia muciniphila (strain ATCC BAA-835 / DSM 22959 / JCM 33894 / BCRC 81048 / CCUG 64013 / CIP 107961 / Muc).